Reading from the N-terminus, the 273-residue chain is Protein PERCC1 (273 aa).

2 disordered regions span residues 18 to 84 (SHES…PETP) and 253 to 273 (GGSE…LAEV). Residues 28 to 56 (EAPEISEEEEEEEEEEEEEEEEEEVDQDQ) show a composition bias toward acidic residues. A compositionally biased stretch (polar residues) spans 67–83 (DSQSSGVVPQDPSSPET).

As to expression, specifically expressed in the stomach, pancreas and intestine. In gastrointestinal tissue, expression is primarily restricted to gastric G cells and duodenal enteroendocrine cells (EECs).

Plays a critical role in intestinal function by promoting the development of enteroendocrine cells (EECs) of the gastrointestinal tract and pancreas. It is thereby required for normal enteroendocrine peptide hormone secretion. The sequence is that of Protein PERCC1 from Mus musculus (Mouse).